The chain runs to 315 residues: Protoheme IX farnesyltransferase (315 aa).

Transmembrane regions (helical) follow at residues 32–52, 53–73, 93–113, 120–140, 153–173, 180–200, 226–246, 249–269, and 295–315; these read VMSL…GHMN, PVLA…SGAL, IPAG…LSAF, LMVN…YAVI, IVIG…AATG, LVLF…LSLF, ALFY…MGFA, FYGV…WRLW, and IFAV…FGVF.

Belongs to the UbiA prenyltransferase family. Protoheme IX farnesyltransferase subfamily.

It localises to the cell inner membrane. The catalysed reaction is heme b + (2E,6E)-farnesyl diphosphate + H2O = Fe(II)-heme o + diphosphate. It functions in the pathway porphyrin-containing compound metabolism; heme O biosynthesis; heme O from protoheme: step 1/1. Functionally, converts heme B (protoheme IX) to heme O by substitution of the vinyl group on carbon 2 of heme B porphyrin ring with a hydroxyethyl farnesyl side group. This is Protoheme IX farnesyltransferase from Brucella canis (strain ATCC 23365 / NCTC 10854 / RM-666).